The chain runs to 602 residues: Aspartate--tRNA(Asp/Asn) ligase (602 aa).

Residue Glu175 coordinates L-aspartate. The interval Gln199 to Lys202 is aspartate. Arg221 serves as a coordination point for L-aspartate. ATP contacts are provided by residues Arg221–Glu223 and Gln230. An L-aspartate-binding site is contributed by His458. Glu492 lines the ATP pocket. Arg499 serves as a coordination point for L-aspartate. Gly544–Arg547 is an ATP binding site.

This sequence belongs to the class-II aminoacyl-tRNA synthetase family. Type 1 subfamily. As to quaternary structure, homodimer.

It is found in the cytoplasm. The enzyme catalyses tRNA(Asx) + L-aspartate + ATP = L-aspartyl-tRNA(Asx) + AMP + diphosphate. In terms of biological role, aspartyl-tRNA synthetase with relaxed tRNA specificity since it is able to aspartylate not only its cognate tRNA(Asp) but also tRNA(Asn). Reaction proceeds in two steps: L-aspartate is first activated by ATP to form Asp-AMP and then transferred to the acceptor end of tRNA(Asp/Asn). In Cupriavidus metallidurans (strain ATCC 43123 / DSM 2839 / NBRC 102507 / CH34) (Ralstonia metallidurans), this protein is Aspartate--tRNA(Asp/Asn) ligase.